Here is a 354-residue protein sequence, read N- to C-terminus: Src kinase-associated phosphoprotein 1 (354 aa).

One can recognise a PH domain in the interval 107–210; that stretch reads NVIKQGYLEK…WVDQISFLLK (104 aa). 2 positions are modified to phosphotyrosine: Tyr-142 and Tyr-236. Phosphotyrosine; by FYN occurs at positions 267 and 290. Residues 285 to 290 are interaction with FYB1; it reads RRRVDY. In terms of domain architecture, SH3 spans 289-350; sequence DYADYYQGLW…PKDYLTTAFE (62 aa).

It belongs to the SKAP family. As to quaternary structure, homodimer. Interacts with FYN. Interacts with PTPRC. Interacts with GRB2 when phosphorylated on Tyr-267. Interacts with FYB1, which is required for SKAP2 protein stability. Part of a complex consisting of SKAP1, FYB1 and CLNK. Interacts with RASGRP1. Interacts with FYB2. In terms of processing, phosphorylated on tyrosines. Phosphorylation by FYN on Tyr-267 is required for GRB2 interaction. Phosphorylation by FYN on Tyr-290 abolishes interaction with FYB1. Tyr-236 is dephosphorylated by PTPRC. As to expression, expressed in mast cells (at protein level).

The protein resides in the cytoplasm. The protein localises to the nucleus. It is found in the cell membrane. Functionally, positively regulates T-cell receptor signaling by enhancing the MAP kinase pathway. Required for optimal conjugation between T-cells and antigen-presenting cells by promoting the clustering of integrin ITGAL on the surface of T-cells. May be involved in high affinity immunoglobulin epsilon receptor signaling in mast cells. This Rattus norvegicus (Rat) protein is Src kinase-associated phosphoprotein 1 (Skap1).